Consider the following 951-residue polypeptide: Plasma membrane ATPase (951 aa).

4 consecutive transmembrane segments (helical) span residues phenylalanine 61 to isoleucine 81, tryptophan 93 to glutamate 113, isoleucine 243 to phenylalanine 263, and leucine 277 to methionine 297. The 4-aspartylphosphate intermediate role is filled by aspartate 329. Mg(2+) is bound by residues aspartate 588 and aspartate 592. 6 helical membrane passes run isoleucine 647 to tryptophan 667, phenylalanine 671 to serine 691, isoleucine 709 to tryptophan 729, glutamate 752 to threonine 772, leucine 785 to alanine 805, and glycine 814 to leucine 834.

The protein belongs to the cation transport ATPase (P-type) (TC 3.A.3) family. Type IIIA subfamily.

Its subcellular location is the cell membrane. It catalyses the reaction ATP + H2O + H(+)(in) = ADP + phosphate + 2 H(+)(out). Its function is as follows. The plasma membrane ATPase of plants and fungi is a hydrogen ion pump. The proton gradient it generates drives the active transport of nutrients by H(+)-symport. The resulting external acidification and/or internal alkinization may mediate growth responses. The polypeptide is Plasma membrane ATPase (Oryza sativa subsp. japonica (Rice)).